The sequence spans 438 residues: Putative ZDHHC-type palmitoyltransferase 7 (438 aa).

2 N-linked (GlcNAc...) asparagine glycosylation sites follow: Asn12 and Asn13. The next 2 helical transmembrane spans lie at 48 to 68 and 77 to 97; these read IFCL…GTIL and YFYL…YFLI. N-linked (GlcNAc...) asparagine glycosylation is found at Asn119, Asn144, and Asn157. The disordered stretch occupies residues 183 to 239; that stretch reads EDSINDDTITTTTTTTTTTSTSTIPEISNDDDDNNNENNNDNVNNRNNNNSNGEKED. 2 stretches are compositionally biased toward low complexity: residues 190 to 206 and 218 to 234; these read TITT…TSTI and NENN…NNSN. N-linked (GlcNAc...) asparagine glycosylation is present at Asn231. The 51-residue stretch at 249 to 299 folds into the DHHC domain; it reads YFCKKCLVDIPLRTKHCVKCNRCVLKYDHHCVFIGGCVGLNNHKNFLLFLL. The next 2 membrane-spanning stretches (helical) occupy residues 294-314 and 330-350; these read FLLF…IIVT and IAII…FALF. Residue Asn360 is glycosylated (N-linked (GlcNAc...) asparagine).

This sequence belongs to the DHHC palmitoyltransferase family.

The protein resides in the membrane. It carries out the reaction L-cysteinyl-[protein] + hexadecanoyl-CoA = S-hexadecanoyl-L-cysteinyl-[protein] + CoA. The protein is Putative ZDHHC-type palmitoyltransferase 7 of Dictyostelium discoideum (Social amoeba).